The sequence spans 204 residues: Acyl-homoserine-lactone synthase (204 aa).

It belongs to the autoinducer synthase family.

The enzyme catalyses a fatty acyl-[ACP] + S-adenosyl-L-methionine = an N-acyl-L-homoserine lactone + S-methyl-5'-thioadenosine + holo-[ACP] + H(+). In terms of biological role, required for the synthesis of acyl-HSL autoinducers that bind to SolR. In Ralstonia nicotianae (strain ATCC BAA-1114 / GMI1000) (Ralstonia solanacearum), this protein is Acyl-homoserine-lactone synthase (solI).